The following is a 162-amino-acid chain: Toluate 1,2-dioxygenase subunit beta (162 aa).

This sequence belongs to the bacterial ring-hydroxylating dioxygenase beta subunit family. As to quaternary structure, this dioxygenase system consists of three proteins: the two subunits of the hydroxylase component (XylX and XylY), and an electron transfer component (XylZ).

Its pathway is xenobiotic degradation; toluene degradation. This chain is Toluate 1,2-dioxygenase subunit beta (xylY), found in Pseudomonas putida (Arthrobacter siderocapsulatus).